Reading from the N-terminus, the 312-residue chain is Olfactory receptor 51B5 (312 aa).

At 1 to 23 the chain is on the extracellular side; that stretch reads MSSSGSSHPFLLTGFPGLEEAHH. The helical transmembrane segment at 24-44 threads the bilayer; that stretch reads WISVFFLFMYISILFGNGTLL. Residues 45–52 lie on the Cytoplasmic side of the membrane; it reads LLIKEDHN. Residues 53–73 form a helical membrane-spanning segment; it reads LHEPMYFFLAMLAATDLGLAL. The Extracellular segment spans residues 74 to 97; sequence TTMPTVLGVLWLDHREIGSAACFS. Cysteine 95 and cysteine 187 form a disulfide bridge. Residues 98–118 form a helical membrane-spanning segment; it reads QAYFIHSLSFLESGILLAMAY. Topologically, residues 119–137 are cytoplasmic; it reads DRFIAICNPLRYTSVLTNT. The chain crosses the membrane as a helical span at residues 138–158; it reads RVVKIGLGVLMRGFVSVVPPI. Topologically, residues 159–194 are extracellular; sequence RPLYFFLYCHSHVLSHAFCLHQDVIKLACADTTFNR. A helical transmembrane segment spans residues 195–215; the sequence is LYPAVLVVFIFVLDYLIIFIS. Topologically, residues 216–235 are cytoplasmic; the sequence is YVLILKTVLSIASREERAKA. The helical transmembrane segment at 236-256 threads the bilayer; sequence LITCVSHICCVLVFYVTVIGL. Over 257-271 the chain is Extracellular; sequence SLIHRFGKQVPHIVH. Residues 272 to 292 traverse the membrane as a helical segment; sequence LIMSYAYFLFPPLMNPITYSV. The Cytoplasmic segment spans residues 293-312; the sequence is KTKQIQNAILHLFTTHRIGT.

Belongs to the G-protein coupled receptor 1 family.

The protein resides in the cell membrane. Functionally, odorant receptor. The sequence is that of Olfactory receptor 51B5 (OR51B5) from Homo sapiens (Human).